The sequence spans 248 residues: Putative imidazole glycerol phosphate synthase subunit hisF2 (248 aa).

Residue Asp-129 is part of the active site.

This sequence belongs to the HisA/HisF family. Heterodimer of HisH and HisF.

The protein resides in the cytoplasm. The enzyme catalyses 5-[(5-phospho-1-deoxy-D-ribulos-1-ylimino)methylamino]-1-(5-phospho-beta-D-ribosyl)imidazole-4-carboxamide + L-glutamine = D-erythro-1-(imidazol-4-yl)glycerol 3-phosphate + 5-amino-1-(5-phospho-beta-D-ribosyl)imidazole-4-carboxamide + L-glutamate + H(+). The protein operates within amino-acid biosynthesis; L-histidine biosynthesis; L-histidine from 5-phospho-alpha-D-ribose 1-diphosphate: step 5/9. In terms of biological role, IGPS catalyzes the conversion of PRFAR and glutamine to IGP, AICAR and glutamate. The HisF subunit catalyzes the cyclization activity that produces IGP and AICAR from PRFAR using the ammonia provided by the HisH subunit. The protein is Putative imidazole glycerol phosphate synthase subunit hisF2 (hisF2) of Campylobacter jejuni subsp. jejuni serotype O:2 (strain ATCC 700819 / NCTC 11168).